A 273-amino-acid chain; its full sequence is MRGSQEVLLMWLLVLAVGGTEHAYRPGRRVCAVRAHGDPVSESFVQRVYQPFLTTCDGHRACSTYRTIYRTAYRRSPGLAPARPRYACCPGWKRTSGLPGACGAAICQPPCRNGGSCVQPGRCRCPAGWRGDTCQSDVDECSARRGGCPQRCVNTAGSYWCQCWEGHSLSADGTLCVPKGGPPRVAPNPTGVDSAMKEEVQRLQSRVDLLEEKLQLVLAPLHSLASQALEHGLPDPGSLLVHSFQQLGRIDSLSEQISFLEEQLGSCSCKKDS.

Residues 1 to 23 (MRGSQEVLLMWLLVLAVGGTEHA) form the signal peptide. One can recognise an EMI domain in the interval 27–104 (GRRVCAVRAH…TSGLPGACGA (78 aa)). 9 disulfides stabilise this stretch: Cys31–Cys89, Cys56–Cys62, Cys88–Cys102, Cys107–Cys117, Cys111–Cys123, Cys125–Cys134, Cys141–Cys152, Cys148–Cys161, and Cys163–Cys176. Positions 103-135 (GAAICQPPCRNGGSCVQPGRCRCPAGWRGDTCQ) constitute an EGF-like 1 domain. The Cell attachment site motif lies at 130-132 (RGD). The 41-residue stretch at 137-177 (DVDECSARRGGCPQRCVNTAGSYWCQCWEGHSLSADGTLCV) folds into the EGF-like 2; calcium-binding domain. A coiled-coil region spans residues 192–219 (VDSAMKEEVQRLQSRVDLLEEKLQLVLA).

Interacts with ITGAV/ITGB3 in an RGD-dependent manner, increasing endothelial cell's motility.

The protein localises to the secreted. It is found in the extracellular space. In terms of biological role, regulates vascular tubulogenesis in vivo. Inhibits platelet-derived growth factor (PDGF)-BB-induced smooth muscle cell migration and promotes endothelial cell adhesion to the extracellular matrix and angiogenesis. This Homo sapiens (Human) protein is Epidermal growth factor-like protein 7 (EGFL7).